Reading from the N-terminus, the 369-residue chain is Cytochrome b561 and DOMON domain-containing protein At3g07570 (369 aa).

Residues 1-22 (MKLYSVSIIIFVLIALSTIVNA) form the signal peptide. Residues 55-167 (QNFILRYART…PRQSLLYAVG (113 aa)) enclose the DOMON domain. Positions 174–369 (SSPDFRLREH…GLEVRKFLKK (196 aa)) constitute a Cytochrome b561 domain. Residues 212–232 (THGLMNMFGWGILIIVGAIVA) traverse the membrane as a helical segment. H213 and H246 together coordinate heme b. 2 consecutive transmembrane segments (helical) span residues 247–267 (IALQ…GLVL) and 279–299 (HKGL…ALLA). Heme b is bound by residues H279 and H315. Transmembrane regions (helical) follow at residues 321 to 341 (LLII…KAGT) and 343 to 363 (WNGG…GLEV).

The cofactor is heme b.

It localises to the membrane. Its function is as follows. May act as a catecholamine-responsive trans-membrane electron transporter. This Arabidopsis thaliana (Mouse-ear cress) protein is Cytochrome b561 and DOMON domain-containing protein At3g07570.